Reading from the N-terminus, the 63-residue chain is Large ribosomal subunit protein uL29 (63 aa).

Belongs to the universal ribosomal protein uL29 family.

The protein is Large ribosomal subunit protein uL29 of Shewanella pealeana (strain ATCC 700345 / ANG-SQ1).